Here is a 218-residue protein sequence, read N- to C-terminus: Thiopurine S-methyltransferase (218 aa).

S-adenosyl-L-methionine contacts are provided by tryptophan 10, leucine 45, glutamate 66, and arginine 123.

The protein belongs to the class I-like SAM-binding methyltransferase superfamily. TPMT family.

The protein resides in the cytoplasm. The enzyme catalyses S-adenosyl-L-methionine + a thiopurine = S-adenosyl-L-homocysteine + a thiopurine S-methylether.. This Pseudomonas fluorescens (strain SBW25) protein is Thiopurine S-methyltransferase.